Reading from the N-terminus, the 280-residue chain is 4-diphosphocytidyl-2-C-methyl-D-erythritol kinase (280 aa).

Lys8 is a catalytic residue. ATP is bound at residue 91 to 101 (PVSAGLAGGST). Asp133 is a catalytic residue.

This sequence belongs to the GHMP kinase family. IspE subfamily.

The catalysed reaction is 4-CDP-2-C-methyl-D-erythritol + ATP = 4-CDP-2-C-methyl-D-erythritol 2-phosphate + ADP + H(+). It functions in the pathway isoprenoid biosynthesis; isopentenyl diphosphate biosynthesis via DXP pathway; isopentenyl diphosphate from 1-deoxy-D-xylulose 5-phosphate: step 3/6. Its function is as follows. Catalyzes the phosphorylation of the position 2 hydroxy group of 4-diphosphocytidyl-2C-methyl-D-erythritol. This Clostridium beijerinckii (strain ATCC 51743 / NCIMB 8052) (Clostridium acetobutylicum) protein is 4-diphosphocytidyl-2-C-methyl-D-erythritol kinase.